Consider the following 311-residue polypeptide: tRNA-cytidine(32) 2-sulfurtransferase (311 aa).

Residues 47–52 carry the PP-loop motif motif; the sequence is SGGKDS. Residues cysteine 122, cysteine 125, and cysteine 213 each coordinate [4Fe-4S] cluster.

This sequence belongs to the TtcA family. As to quaternary structure, homodimer. Mg(2+) serves as cofactor. It depends on [4Fe-4S] cluster as a cofactor.

Its subcellular location is the cytoplasm. The enzyme catalyses cytidine(32) in tRNA + S-sulfanyl-L-cysteinyl-[cysteine desulfurase] + AH2 + ATP = 2-thiocytidine(32) in tRNA + L-cysteinyl-[cysteine desulfurase] + A + AMP + diphosphate + H(+). The protein operates within tRNA modification. In terms of biological role, catalyzes the ATP-dependent 2-thiolation of cytidine in position 32 of tRNA, to form 2-thiocytidine (s(2)C32). The sulfur atoms are provided by the cysteine/cysteine desulfurase (IscS) system. This chain is tRNA-cytidine(32) 2-sulfurtransferase, found in Salmonella typhimurium (strain LT2 / SGSC1412 / ATCC 700720).